We begin with the raw amino-acid sequence, 153 residues long: UPF0178 protein Sfum_1097 (153 aa).

It belongs to the UPF0178 family.

The sequence is that of UPF0178 protein Sfum_1097 from Syntrophobacter fumaroxidans (strain DSM 10017 / MPOB).